The chain runs to 83 residues: Large ribosomal subunit protein eL43 (83 aa).

Residues cysteine 38, cysteine 41, cysteine 56, and cysteine 59 each contribute to the Zn(2+) site. The C4-type zinc-finger motif lies at 38-59 (CPVCGRKAVKRISTGIWQCQKC).

It belongs to the eukaryotic ribosomal protein eL43 family. Putative zinc-binding subfamily. In terms of assembly, part of the 50S ribosomal subunit. Requires Zn(2+) as cofactor.

In terms of biological role, binds to the 23S rRNA. The polypeptide is Large ribosomal subunit protein eL43 (Pyrococcus furiosus (strain ATCC 43587 / DSM 3638 / JCM 8422 / Vc1)).